A 141-amino-acid polypeptide reads, in one-letter code: MVDMDRISISLPTNLLAEFDEIIEERGYASRSEAIRDSIRDYLIKHKWIHSLEGHRAGTISIIYDHHSTDVMEKLTTIQHDYEKLIVATIHMHLDHDHCMEVVLVKGDASDIKDLTDKLTSQKGVKQVKLTVMVPGGNIPQ.

4 residues coordinate Ni(2+): H80, H91, H93, and C99.

Belongs to the transcriptional regulatory CopG/NikR family. It depends on Ni(2+) as a cofactor.

Its function is as follows. Transcriptional regulator. This Methanococcus maripaludis (strain C7 / ATCC BAA-1331) protein is Putative nickel-responsive regulator.